The sequence spans 283 residues: Elongation factor Ts (283 aa).

An involved in Mg(2+) ion dislocation from EF-Tu region spans residues 79 to 82 (TDFV).

This sequence belongs to the EF-Ts family.

Its subcellular location is the cytoplasm. In terms of biological role, associates with the EF-Tu.GDP complex and induces the exchange of GDP to GTP. It remains bound to the aminoacyl-tRNA.EF-Tu.GTP complex up to the GTP hydrolysis stage on the ribosome. The chain is Elongation factor Ts from Shewanella oneidensis (strain ATCC 700550 / JCM 31522 / CIP 106686 / LMG 19005 / NCIMB 14063 / MR-1).